The sequence spans 83 residues: MADNTVADVKKLSFERAIEELESIVKRLEDGKVPLEESVTIYERGEALKRRCEELLRQAEARVEKITTDASGRATGTAPLDVQ.

The protein belongs to the XseB family. Heterooligomer composed of large and small subunits.

The protein localises to the cytoplasm. It carries out the reaction Exonucleolytic cleavage in either 5'- to 3'- or 3'- to 5'-direction to yield nucleoside 5'-phosphates.. Bidirectionally degrades single-stranded DNA into large acid-insoluble oligonucleotides, which are then degraded further into small acid-soluble oligonucleotides. This chain is Exodeoxyribonuclease 7 small subunit, found in Bradyrhizobium sp. (strain ORS 278).